A 616-amino-acid polypeptide reads, in one-letter code: Protein LNK1 (616 aa).

4 disordered regions span residues 72 to 112, 361 to 398, 410 to 434, and 567 to 616; these read GKNP…HGFN, ESKSGIKSENKPSPSSASNESYTSNHAQSIESLQGPTV, ANLLPGQDMPPSFAANTKKSSKTDS, and SSLS…SDNN. Over residues 371 to 395 the composition is skewed to polar residues; it reads KPSPSSASNESYTSNHAQSIESLQG. The segment covering 567 to 577 has biased composition (low complexity); sequence SSLSSDNNVLS. Residues 594–608 show a composition bias toward basic and acidic residues; that stretch reads RIEKQEETTELRPEA.

In terms of assembly, interacts with CCA1, LHY, REV4 and REV8, but not with PRR7 or PRR9. As to expression, expressed in roots, stems, leaves, seedlings, cotyledons, inflorescences and siliques. Highest expression in root tips, young leaves and vasculatur tissues.

It is found in the nucleus. Functionally, transcriptional coactivator necessary for expression of the clock genes PRR5 and TOC1. Antagonizes REV8 function in the regulation of anthocyanin accumulation. Involved in red light input to the clock. Activates clock-controlled genes with afternoon peak. Mediates light inhibition of hypocotyl elongation. The protein is Protein LNK1 of Arabidopsis thaliana (Mouse-ear cress).